The chain runs to 501 residues: Glutamyl-tRNA(Gln) amidotransferase subunit A (501 aa).

Residues lysine 84 and serine 159 each act as charge relay system in the active site. The Acyl-ester intermediate role is filled by serine 183.

The protein belongs to the amidase family. GatA subfamily. Heterotrimer of A, B and C subunits.

The enzyme catalyses L-glutamyl-tRNA(Gln) + L-glutamine + ATP + H2O = L-glutaminyl-tRNA(Gln) + L-glutamate + ADP + phosphate + H(+). Its function is as follows. Allows the formation of correctly charged Gln-tRNA(Gln) through the transamidation of misacylated Glu-tRNA(Gln) in organisms which lack glutaminyl-tRNA synthetase. The reaction takes place in the presence of glutamine and ATP through an activated gamma-phospho-Glu-tRNA(Gln). This Streptomyces avermitilis (strain ATCC 31267 / DSM 46492 / JCM 5070 / NBRC 14893 / NCIMB 12804 / NRRL 8165 / MA-4680) protein is Glutamyl-tRNA(Gln) amidotransferase subunit A.